Here is a 348-residue protein sequence, read N- to C-terminus: Ethanol acetyltransferase 2 (348 aa).

A mitochondrion-targeting transit peptide spans 1–19 (MIFNSLSIKRLSSTXTSLP). The 257-residue stretch at 49 to 305 (IIFLHGIYGY…VMKERPQEYI (257 aa)) folds into the AB hydrolase-1 domain. Catalysis depends on charge relay system residues Ser-121, Asp-145, and His-294.

It belongs to the AB hydrolase superfamily.

The protein localises to the mitochondrion. The enzyme catalyses ethanol + acetyl-CoA = ethyl acetate + CoA. It carries out the reaction acetyl-CoA + H2O = acetate + CoA + H(+). The catalysed reaction is ethyl acetate + H2O = ethanol + acetate + H(+). In terms of biological role, alcohol acetyltransferase that catalyzes the synthesis of ethyl acetate from ethanol and acetyl-CoA. Can also function as a thioesterase by hydrolyzing acetyl-CoA in the absence of ethanol, as well as esterase hydrolyzing ethyl acetate. The protein is Ethanol acetyltransferase 2 (EAT2) of Hanseniaspora uvarum (Yeast).